The sequence spans 479 residues: M-phase inducer phosphatase (479 aa).

Residues Met182–Pro218 form a disordered region. Positions Glu199–Glu209 are enriched in basic and acidic residues. The region spanning Lys316–Glu432 is the Rhodanese domain. Cys379 is a catalytic residue. Phosphoserine is present on Ser455.

The protein belongs to the MPI phosphatase family.

The catalysed reaction is O-phospho-L-tyrosyl-[protein] + H2O = L-tyrosyl-[protein] + phosphate. Functionally, this protein functions as a dosage-dependent inducer in mitotic control. It is a tyrosine protein phosphatase required for progression of the cell cycle. It may directly dephosphorylate Cdk1 and activate the Cdk1 activity. The polypeptide is M-phase inducer phosphatase (stg) (Drosophila melanogaster (Fruit fly)).